The primary structure comprises 532 residues: Metal-staphylopine-binding protein CntA (532 aa).

The first 20 residues, 1-20 (MRKLTKMSAMLLASGLILTG), serve as a signal peptide directing secretion. Cys-21 is lipidated: N-palmitoyl cysteine. Cys-21 is lipidated: S-diacylglycerol cysteine. Residues Arg-165, Arg-418, and Asn-448 each contribute to the staphylopine site.

It belongs to the bacterial solute-binding protein 5 family. The complex is composed of two ATP-binding proteins (CntD and CntF), two transmembrane proteins (CntB and CntC) and a solute-binding protein (CntA).

Its subcellular location is the cell membrane. Part of the ABC transporter complex CntABCDF (Opp1) involved in the uptake of metal in complex with the metallophore staphylopine (StP). May be involved in the import of a large array of divalent metals ions such as nickel, cobalt, zinc, copper and iron. Binds the metal via the metallophore StP, and transfers the StP-metal complex to the membrane-bound permease. The sequence is that of Metal-staphylopine-binding protein CntA from Staphylococcus aureus (strain Mu50 / ATCC 700699).